The sequence spans 155 residues: Ribosomal RNA large subunit methyltransferase H (155 aa).

S-adenosyl-L-methionine-binding positions include Leu72, Gly103, and 122–127 (LSALTL).

This sequence belongs to the RNA methyltransferase RlmH family. Homodimer.

The protein localises to the cytoplasm. It carries out the reaction pseudouridine(1915) in 23S rRNA + S-adenosyl-L-methionine = N(3)-methylpseudouridine(1915) in 23S rRNA + S-adenosyl-L-homocysteine + H(+). Its function is as follows. Specifically methylates the pseudouridine at position 1915 (m3Psi1915) in 23S rRNA. The sequence is that of Ribosomal RNA large subunit methyltransferase H from Salmonella dublin (strain CT_02021853).